The chain runs to 394 residues: Phosphoglycerate kinase (394 aa).

Substrate-binding positions include 21–23 (DFN), R36, 59–62 (HLGR), R118, and R151. A Phosphoserine modification is found at S183. Residues K201 and G292 each contribute to the ATP site. Phosphothreonine is present on T299. ATP-binding positions include E323 and 350 to 353 (GGDS).

Belongs to the phosphoglycerate kinase family. Monomer.

It is found in the cytoplasm. It catalyses the reaction (2R)-3-phosphoglycerate + ATP = (2R)-3-phospho-glyceroyl phosphate + ADP. It functions in the pathway carbohydrate degradation; glycolysis; pyruvate from D-glyceraldehyde 3-phosphate: step 2/5. The sequence is that of Phosphoglycerate kinase from Bacillus thuringiensis subsp. konkukian (strain 97-27).